We begin with the raw amino-acid sequence, 315 residues long: Ribonuclease Z (315 aa).

Zn(2+) is bound by residues H62, H64, D66, H67, H144, D215, and H273. D66 serves as the catalytic Proton acceptor.

The protein belongs to the RNase Z family. As to quaternary structure, homodimer. Requires Zn(2+) as cofactor.

It carries out the reaction Endonucleolytic cleavage of RNA, removing extra 3' nucleotides from tRNA precursor, generating 3' termini of tRNAs. A 3'-hydroxy group is left at the tRNA terminus and a 5'-phosphoryl group is left at the trailer molecule.. In terms of biological role, zinc phosphodiesterase, which displays some tRNA 3'-processing endonuclease activity. Probably involved in tRNA maturation, by removing a 3'-trailer from precursor tRNA. The chain is Ribonuclease Z from Synechococcus sp. (strain CC9311).